The chain runs to 243 residues: MAKVEQVLSLEPQHELKFRGPFTDVVTTNLKLGNPTDRNVCFKVKTTAPRRYCVRPNSGIIDAGASINVSVMLQPFDYDPNEKSKHKFMVQSMFAPTDTSDMEAVWKEAKPEDLMDSKLRCVFELPAENDKPHDVEINKIIPTTASKTETPTVSKALSSSLDDTEVKKVMEECKRLQSEVQRLREENKQFKEEDGLRMRKTAQSNSPAPASAMAGKEEGLSTRLLALVVLFFIVGVIIGKIAL.

N-acetylalanine is present on Ala-2. Topologically, residues 2–218 are cytoplasmic; the sequence is AKVEQVLSLE…PASAMAGKEE (217 aa). The MSP domain occupies 7–124; the sequence is VLSLEPQHEL…MDSKLRCVFE (118 aa). Ser-146 carries the phosphoserine modification. Residue Lys-147 forms a Glycyl lysine isopeptide (Lys-Gly) (interchain with G-Cter in SUMO1) linkage. Residue Thr-150 is modified to Phosphothreonine. Ser-158, Ser-159, and Ser-160 each carry phosphoserine. Residues 161-196 are a coiled coil; that stretch reads LDDTEVKKVMEECKRLQSEVQRLREENKQFKEEDGL. A compositionally biased stretch (basic and acidic residues) spans 186–197; it reads ENKQFKEEDGLR. The segment at 186–214 is disordered; it reads ENKQFKEEDGLRMRKTAQSNSPAPASAMA. Ser-206 is subject to Phosphoserine. The helical; Anchor for type IV membrane protein transmembrane segment at 219-239 threads the bilayer; it reads GLSTRLLALVVLFFIVGVIIG.

It belongs to the VAMP-associated protein (VAP) (TC 9.B.17) family. Homodimer, and heterodimer with VAPA. Interacts with VAMP1 and VAMP2. Interacts (via MSP domain) with ZFYVE27. Interacts with RMDN3. Interacts with KIF5A in a ZFYVE27-dependent manner. Interacts (via MSP domain) with STARD3 (via phospho-FFAT motif). Interacts with STARD3NL (via FFAT motif). Interacts with CERT1. Interacts with PLEKHA3 and SACM1L to form a ternary complex. Interacts with VPS13A (via FFAT motif). Interacts with RB1CC1 (via phosphorylated FFAT motif), MIGA2 (via phosphorylated FFAT motif), RMDN3 (via phosphorylated FFAT motif), OSBPL1A (via FFAT motif), KCNB1 (via phosphorylated FFAT motif) and KCNB2 (via phosphorylated FFAT motif). Interacts (via MSP domain) with WDR44 (via FFAT motif); the interactions connect the endoplasmic reticulum (ER) with the endosomal tubule.

The protein localises to the endoplasmic reticulum membrane. Its function is as follows. Endoplasmic reticulum (ER)-anchored protein that mediates the formation of contact sites between the ER and endosomes via interaction with FFAT motif-containing proteins such as STARD3 or WDR44. Interacts with STARD3 in a FFAT motif phosphorylation dependent manner. Via interaction with WDR44 participates in neosynthesized protein export. Participates in the endoplasmic reticulum unfolded protein response (UPR) by inducing ERN1/IRE1 activity. Involved in cellular calcium homeostasis regulation. In Bos taurus (Bovine), this protein is Vesicle-associated membrane protein-associated protein B.